Consider the following 417-residue polypeptide: S-inosyl-L-homocysteine hydrolase (417 aa).

Positions 124 and 149 each coordinate substrate. 150 to 152 (TTT) contacts NAD(+). 2 residues coordinate substrate: lysine 179 and aspartate 183. Residues asparagine 184, 213–218 (GYGWCG), glutamate 236, asparagine 271, 292–294 (SGH), and asparagine 339 each bind NAD(+).

The protein belongs to the adenosylhomocysteinase family. Requires NAD(+) as cofactor.

The protein localises to the cytoplasm. The enzyme catalyses S-inosyl-L-homocysteine + H2O = L-homocysteine + inosine. Its pathway is amino-acid biosynthesis; S-adenosyl-L-methionine biosynthesis. Catalyzes the hydrolysis of S-inosyl-L-homocysteine (SIH) to L-homocysteine (Hcy) and inosine. Likely functions in a S-adenosyl-L-methionine (SAM) recycling pathway from S-adenosyl-L-homocysteine (SAH) produced from SAM-dependent methylation reactions. Can also catalyze the reverse reaction in vitro, i.e. the synthesis of SIH from Hcy and inosine. The chain is S-inosyl-L-homocysteine hydrolase from Methanothermobacter thermautotrophicus (strain ATCC 29096 / DSM 1053 / JCM 10044 / NBRC 100330 / Delta H) (Methanobacterium thermoautotrophicum).